Reading from the N-terminus, the 393-residue chain is Formate-dependent phosphoribosylglycinamide formyltransferase (393 aa).

N(1)-(5-phospho-beta-D-ribosyl)glycinamide-binding positions include 22–23 (EL) and glutamate 82. ATP is bound by residues arginine 114, lysine 155, 160-165 (SSGKGQ), 195-198 (EGFI), and glutamate 203. The region spanning 119–308 (RLAAEELKLP…QFALHARAIL (190 aa)) is the ATP-grasp domain. Residues glutamate 267 and glutamate 279 each coordinate Mg(2+). Residues aspartate 286, lysine 356, and 363–364 (RR) contribute to the N(1)-(5-phospho-beta-D-ribosyl)glycinamide site.

It belongs to the PurK/PurT family. Homodimer.

It carries out the reaction N(1)-(5-phospho-beta-D-ribosyl)glycinamide + formate + ATP = N(2)-formyl-N(1)-(5-phospho-beta-D-ribosyl)glycinamide + ADP + phosphate + H(+). Its pathway is purine metabolism; IMP biosynthesis via de novo pathway; N(2)-formyl-N(1)-(5-phospho-D-ribosyl)glycinamide from N(1)-(5-phospho-D-ribosyl)glycinamide (formate route): step 1/1. Involved in the de novo purine biosynthesis. Catalyzes the transfer of formate to 5-phospho-ribosyl-glycinamide (GAR), producing 5-phospho-ribosyl-N-formylglycinamide (FGAR). Formate is provided by PurU via hydrolysis of 10-formyl-tetrahydrofolate. The protein is Formate-dependent phosphoribosylglycinamide formyltransferase of Pseudomonas syringae pv. syringae (strain B728a).